A 34-amino-acid polypeptide reads, in one-letter code: Photosystem II reaction center protein M (34 aa).

A helical membrane pass occupies residues 5-25 (ILALIAIALFISVPTAFLIII).

The protein belongs to the PsbM family. In terms of assembly, PSII is composed of 1 copy each of membrane proteins PsbA, PsbB, PsbC, PsbD, PsbE, PsbF, PsbH, PsbI, PsbJ, PsbK, PsbL, PsbM, PsbT, PsbX, PsbY, PsbZ, Psb30/Ycf12, at least 3 peripheral proteins of the oxygen-evolving complex and a large number of cofactors. It forms dimeric complexes.

It localises to the plastid. The protein localises to the chloroplast thylakoid membrane. One of the components of the core complex of photosystem II (PSII). PSII is a light-driven water:plastoquinone oxidoreductase that uses light energy to abstract electrons from H(2)O, generating O(2) and a proton gradient subsequently used for ATP formation. It consists of a core antenna complex that captures photons, and an electron transfer chain that converts photonic excitation into a charge separation. This subunit is found at the monomer-monomer interface. The sequence is that of Photosystem II reaction center protein M from Gnetum parvifolium (Small-leaved jointfir).